Here is a 102-residue protein sequence, read N- to C-terminus: Large ribosomal subunit protein bL21 (102 aa).

This sequence belongs to the bacterial ribosomal protein bL21 family. As to quaternary structure, part of the 50S ribosomal subunit. Contacts protein L20.

This protein binds to 23S rRNA in the presence of protein L20. This chain is Large ribosomal subunit protein bL21, found in Zymomonas mobilis subsp. mobilis (strain ATCC 31821 / ZM4 / CP4).